The following is a 352-amino-acid chain: Quinolinate synthase (352 aa).

Iminosuccinate-binding residues include His-48 and Ser-69. Residue Cys-114 coordinates [4Fe-4S] cluster. Residues 140-142 (YAN) and Ser-157 each bind iminosuccinate. Residue Cys-201 participates in [4Fe-4S] cluster binding. Iminosuccinate contacts are provided by residues 227 to 229 (HPE) and Thr-244. Cys-298 contributes to the [4Fe-4S] cluster binding site.

The protein belongs to the quinolinate synthase family. Type 1 subfamily. The cofactor is [4Fe-4S] cluster.

The protein localises to the cytoplasm. It carries out the reaction iminosuccinate + dihydroxyacetone phosphate = quinolinate + phosphate + 2 H2O + H(+). Its pathway is cofactor biosynthesis; NAD(+) biosynthesis; quinolinate from iminoaspartate: step 1/1. Its function is as follows. Catalyzes the condensation of iminoaspartate with dihydroxyacetone phosphate to form quinolinate. The polypeptide is Quinolinate synthase (Pseudomonas entomophila (strain L48)).